The following is a 463-amino-acid chain: Glutamate--tRNA ligase (463 aa).

The 'HIGH' region signature appears at Pro10–Gly20. The 'KMSKS' region motif lies at Lys236–Arg240. Residue Lys239 participates in ATP binding.

The protein belongs to the class-I aminoacyl-tRNA synthetase family. Glutamate--tRNA ligase type 1 subfamily. As to quaternary structure, monomer.

The protein resides in the cytoplasm. It catalyses the reaction tRNA(Glu) + L-glutamate + ATP = L-glutamyl-tRNA(Glu) + AMP + diphosphate. Catalyzes the attachment of glutamate to tRNA(Glu) in a two-step reaction: glutamate is first activated by ATP to form Glu-AMP and then transferred to the acceptor end of tRNA(Glu). In Nitratidesulfovibrio vulgaris (strain DP4) (Desulfovibrio vulgaris), this protein is Glutamate--tRNA ligase.